A 269-amino-acid chain; its full sequence is Tryptophan synthase alpha chain (269 aa).

Active-site proton acceptor residues include glutamate 56 and aspartate 67.

The protein belongs to the TrpA family. As to quaternary structure, tetramer of two alpha and two beta chains.

The catalysed reaction is (1S,2R)-1-C-(indol-3-yl)glycerol 3-phosphate + L-serine = D-glyceraldehyde 3-phosphate + L-tryptophan + H2O. Its pathway is amino-acid biosynthesis; L-tryptophan biosynthesis; L-tryptophan from chorismate: step 5/5. Its function is as follows. The alpha subunit is responsible for the aldol cleavage of indoleglycerol phosphate to indole and glyceraldehyde 3-phosphate. This is Tryptophan synthase alpha chain from Mycobacterium ulcerans (strain Agy99).